Consider the following 512-residue polypeptide: 2-isopropylmalate synthase (512 aa).

Positions 4–266 (IEIFDTTLRD…TTKLNLKEIA (263 aa)) constitute a Pyruvate carboxyltransferase domain. Mn(2+)-binding residues include Asp-13, His-201, His-203, and Asn-237. The regulatory domain stretch occupies residues 390–512 (QLESVQLAYG…GEPTPVSATI (123 aa)).

Belongs to the alpha-IPM synthase/homocitrate synthase family. LeuA type 1 subfamily. In terms of assembly, homodimer. Mn(2+) serves as cofactor.

It localises to the cytoplasm. It catalyses the reaction 3-methyl-2-oxobutanoate + acetyl-CoA + H2O = (2S)-2-isopropylmalate + CoA + H(+). The protein operates within amino-acid biosynthesis; L-leucine biosynthesis; L-leucine from 3-methyl-2-oxobutanoate: step 1/4. In terms of biological role, catalyzes the condensation of the acetyl group of acetyl-CoA with 3-methyl-2-oxobutanoate (2-ketoisovalerate) to form 3-carboxy-3-hydroxy-4-methylpentanoate (2-isopropylmalate). The polypeptide is 2-isopropylmalate synthase (Brevibacillus brevis (strain 47 / JCM 6285 / NBRC 100599)).